Consider the following 189-residue polypeptide: Segregation and condensation protein B (189 aa).

This sequence belongs to the ScpB family. As to quaternary structure, homodimer. Homodimerization may be required to stabilize the binding of ScpA to the Smc head domains. Component of a cohesin-like complex composed of ScpA, ScpB and the Smc homodimer, in which ScpA and ScpB bind to the head domain of Smc. The presence of the three proteins is required for the association of the complex with DNA.

The protein resides in the cytoplasm. Its function is as follows. Participates in chromosomal partition during cell division. May act via the formation of a condensin-like complex containing Smc and ScpA that pull DNA away from mid-cell into both cell halves. The chain is Segregation and condensation protein B from Clostridium tetani (strain Massachusetts / E88).